The sequence spans 342 residues: Transmembrane protein 115 homolog (342 aa).

The Cytoplasmic segment spans residues 1-21 (MQYSSRFLELNIPDSFLNINK). The chain crosses the membrane as a helical span at residues 22 to 42 (IPDATKFITVTYICLTATLFC). The Lumenal segment spans residues 43-121 (IRRSLYNKLV…NWNSSKEMFK (79 aa)). Asparagine 114 carries an N-linked (GlcNAc...) asparagine glycan. A helical membrane pass occupies residues 122 to 142 (FIIVLGSLTNVLIIMLTLLVS). Topologically, residues 143-159 (FFSNKVRLDIPLDGNYT) are cytoplasmic. A helical transmembrane segment spans residues 160–180 (ILIGFPIIYRQLLPETTIIHL). The Lumenal portion of the chain corresponds to 181–207 (KTPQFLAKNFRFKLLPIFVMFTMTVTQ). The chain crosses the membrane as a helical span at residues 208–228 (IIWFHHFAQLFSIWVTFFASW). Residues 229–342 (SYLRFFQKLA…QVLEERMVNP (114 aa)) lie on the Cytoplasmic side of the membrane.

The protein belongs to the TMEM115 family. As to quaternary structure, homooligomer.

It is found in the golgi apparatus membrane. Its function is as follows. May play a role in retrograde transport of proteins from the Golgi to the endoplasmic reticulum. In Saccharomyces cerevisiae (strain ATCC 204508 / S288c) (Baker's yeast), this protein is Transmembrane protein 115 homolog.